Consider the following 185-residue polypeptide: Endoribonuclease YbeY (185 aa).

Positions 142, 146, and 152 each coordinate Zn(2+).

The protein belongs to the endoribonuclease YbeY family. It depends on Zn(2+) as a cofactor.

It localises to the cytoplasm. Functionally, single strand-specific metallo-endoribonuclease involved in late-stage 70S ribosome quality control and in maturation of the 3' terminus of the 16S rRNA. The polypeptide is Endoribonuclease YbeY (Parvibaculum lavamentivorans (strain DS-1 / DSM 13023 / NCIMB 13966)).